The primary structure comprises 1037 residues: Sodium/potassium exporting P-type ATPase cta3 (1037 aa).

Residues 1-61 lie on the Cytoplasmic side of the membrane; the sequence is MVTINISNPV…GVSAWKVLLR (61 aa). A helical membrane pass occupies residues 62–82; sequence QVLNAMCVVLILAAALSFGTT. A topological domain (extracellular) is located at residue Asp83. Residues 84 to 104 traverse the membrane as a helical segment; it reads WIEGGVISAIIVLNITVGFIQ. Over 105-281 the chain is Cytoplasmic; sequence EYKAEKTMDS…LNVGTPLQRK (177 aa). The chain crosses the membrane as a helical span at residues 282 to 302; the sequence is LTVLAYILFCIAIILAIIVMA. The Extracellular segment spans residues 303-313; the sequence is AHSFHVTNEVS. The chain crosses the membrane as a helical span at residues 314 to 334; that stretch reads IYAISLGISIIPESLIAVLSI. Topologically, residues 335–760 are cytoplasmic; it reads TMAMGQKNMS…GRRMFDNIMR (426 aa). Asp368 (4-aspartylphosphate intermediate) is an active-site residue. Residues Asp368 and Thr370 each coordinate Mg(2+). 9 residues coordinate ATP: Thr370, Glu468, Lys520, Arg559, Thr620, Gly621, Asp622, Arg678, and Lys684. Residue Asp703 participates in Mg(2+) binding. Position 706 (Asn706) interacts with ATP. The chain crosses the membrane as a helical span at residues 761–781; that stretch reads FVLHLLVSNVGEVILLVVGLA. The Extracellular portion of the chain corresponds to 782–787; sequence FRDEVH. The chain crosses the membrane as a helical span at residues 788-808; the sequence is LSVFPMSPVEILWCNMITSSF. Topologically, residues 809–844 are cytoplasmic; that stretch reads PSMGLGMELAQPDVMERLPHDNKVGIFQKSLIVDMM. Residues 845-865 form a helical membrane-spanning segment; the sequence is VYGFFLGVVSLMTWVVIMYGF. The Extracellular segment spans residues 866-889; the sequence is GTGNLSYDCNAHYHAGCNDVFKAR. The N-linked (GlcNAc...) asparagine glycan is linked to Asn869. A helical membrane pass occupies residues 890–910; that stretch reads SAVFAVVTFCILIMAVEVKNF. At 911-939 the chain is on the cytoplasmic side; sequence DNSLFNLHGIPWGEWNFRYFLHTLVENKF. Residues 940–960 traverse the membrane as a helical segment; that stretch reads LAWAIALAAVSVFPTIYIPVI. Over 961–969 the chain is Extracellular; it reads NRDVFKHTY. Residues 970 to 990 traverse the membrane as a helical segment; that stretch reads IGWEWGVVAVAVMFYFFYVEI. At 991 to 1037 the chain is on the cytoplasmic side; that stretch reads WKSIRRSLTNPQKKGKFRRTLSNTITTESKLSEKDLEHRLFLQSRRA. Ser1012 bears the Phosphoserine mark.

The protein belongs to the cation transport ATPase (P-type) (TC 3.A.3) family. Type IID subfamily. Requires Mg(2+) as cofactor. Post-translationally, the active site is phosphorylated in presence of sodium or potassium and in conditions of higher pH. Not phosphorylated in presence of calcium ions.

It localises to the cell membrane. It catalyses the reaction Na(+)(in) + ATP + H2O = Na(+)(out) + ADP + phosphate + H(+). It carries out the reaction K(+)(in) + ATP + H2O = K(+)(out) + ADP + phosphate + H(+). Its function is as follows. Catalyzes the hydrolysis of ATP coupled with the export of sodium and potassium from the cell. May export sodium less efficiently. May transport other cations such as lithium. Sodium/potassium efflux ATPases are involved in salt tolerance and maintaining the membrane potential across the plasma membrane in high salinity (Na+) or alkaline (K+) environments. This chain is Sodium/potassium exporting P-type ATPase cta3, found in Schizosaccharomyces pombe (strain 972 / ATCC 24843) (Fission yeast).